The sequence spans 162 residues: NADH-quinone oxidoreductase subunit I (162 aa).

4Fe-4S ferredoxin-type domains lie at 54–83 (RRYENGEERCIACKLCEAVCPAMAITIESE) and 93–122 (TRYDIDLTKCIFCGFCEESCPVDSIVETQI). [4Fe-4S] cluster contacts are provided by Cys63, Cys66, Cys69, Cys73, Cys102, Cys105, Cys108, and Cys112.

Belongs to the complex I 23 kDa subunit family. In terms of assembly, NDH-1 is composed of 14 different subunits. Subunits NuoA, H, J, K, L, M, N constitute the membrane sector of the complex. Requires [4Fe-4S] cluster as cofactor.

It localises to the cell inner membrane. The enzyme catalyses a quinone + NADH + 5 H(+)(in) = a quinol + NAD(+) + 4 H(+)(out). Its function is as follows. NDH-1 shuttles electrons from NADH, via FMN and iron-sulfur (Fe-S) centers, to quinones in the respiratory chain. The immediate electron acceptor for the enzyme in this species is believed to be ubiquinone. Couples the redox reaction to proton translocation (for every two electrons transferred, four hydrogen ions are translocated across the cytoplasmic membrane), and thus conserves the redox energy in a proton gradient. The protein is NADH-quinone oxidoreductase subunit I of Burkholderia thailandensis (strain ATCC 700388 / DSM 13276 / CCUG 48851 / CIP 106301 / E264).